We begin with the raw amino-acid sequence, 486 residues long: Betaine aldehyde dehydrogenase (486 aa).

K(+) is bound by residues Thr23 and Asp90. 147-149 (GAW) provides a ligand contact to NAD(+). The active-site Charge relay system is the Lys159. Residues 173-176 (KPSE) and 226-229 (ESGT) contribute to the NAD(+) site. K(+) is bound at residue Leu241. Glu247 serves as the catalytic Proton acceptor. 3 residues coordinate NAD(+): Gly249, Cys281, and Glu382. Cys281 (nucleophile) is an active-site residue. Cys281 is modified (cysteine sulfenic acid (-SOH)). Residues Lys452 and Gly455 each coordinate K(+). Glu459 acts as the Charge relay system in catalysis.

The protein belongs to the aldehyde dehydrogenase family. As to quaternary structure, dimer of dimers. Requires K(+) as cofactor.

It carries out the reaction betaine aldehyde + NAD(+) + H2O = glycine betaine + NADH + 2 H(+). Its pathway is amine and polyamine biosynthesis; betaine biosynthesis via choline pathway; betaine from betaine aldehyde: step 1/1. In terms of biological role, involved in the biosynthesis of the osmoprotectant glycine betaine. Catalyzes the irreversible oxidation of betaine aldehyde to the corresponding acid. The sequence is that of Betaine aldehyde dehydrogenase from Vibrio vulnificus (strain YJ016).